The sequence spans 305 residues: Translation initiation factor eIF2B subunit alpha (305 aa).

Lys35 carries the post-translational modification N6-acetyllysine.

It belongs to the eIF-2B alpha/beta/delta subunits family. In terms of assembly, component of the translation initiation factor 2B (eIF2B) complex which is a heterodecamer of two sets of five different subunits: alpha, beta, gamma, delta and epsilon. Subunits alpha, beta and delta comprise a regulatory subcomplex and subunits epsilon and gamma comprise a catalytic subcomplex. Within the complex, the hexameric regulatory complex resides at the center, with the two heterodimeric catalytic subcomplexes bound on opposite sides.

It is found in the cytoplasm. Its subcellular location is the cytosol. Its activity is regulated as follows. Activated by the chemical integrated stress response (ISR) inhibitor ISRIB which stimulates guanine nucleotide exchange factor activity for both phosphorylated and unphosphorylated eIF2. In terms of biological role, acts as a component of the translation initiation factor 2B (eIF2B) complex, which catalyzes the exchange of GDP for GTP on eukaryotic initiation factor 2 (eIF2) gamma subunit. Its guanine nucleotide exchange factor activity is repressed when bound to eIF2 complex phosphorylated on the alpha subunit, thereby limiting the amount of methionyl-initiator methionine tRNA available to the ribosome and consequently global translation is repressed. The protein is Translation initiation factor eIF2B subunit alpha (Eif2b1) of Mus musculus (Mouse).